We begin with the raw amino-acid sequence, 342 residues long: Ferredoxin--NADP reductase (342 aa).

FAD-binding residues include C17, D36, Q44, Y49, I89, F124, D289, and T330.

The protein belongs to the ferredoxin--NADP reductase type 2 family. Homodimer. FAD serves as cofactor.

It carries out the reaction 2 reduced [2Fe-2S]-[ferredoxin] + NADP(+) + H(+) = 2 oxidized [2Fe-2S]-[ferredoxin] + NADPH. The sequence is that of Ferredoxin--NADP reductase from Rhodopseudomonas palustris (strain BisB5).